The following is a 31-amino-acid chain: Photosystem II reaction center protein T (31 aa).

The chain crosses the membrane as a helical span at residues A3–F23.

The protein belongs to the PsbT family. PSII is composed of 1 copy each of membrane proteins PsbA, PsbB, PsbC, PsbD, PsbE, PsbF, PsbH, PsbI, PsbJ, PsbK, PsbL, PsbM, PsbT, PsbX, PsbY, Psb30/Ycf12, peripheral proteins PsbO, CyanoQ (PsbQ), PsbU, PsbV and a large number of cofactors. It forms dimeric complexes.

Its subcellular location is the cellular thylakoid membrane. Functionally, found at the monomer-monomer interface of the photosystem II (PS II) dimer, plays a role in assembly and dimerization of PSII. PSII is a light-driven water plastoquinone oxidoreductase, using light energy to abstract electrons from H(2)O, generating a proton gradient subsequently used for ATP formation. The polypeptide is Photosystem II reaction center protein T (Prochlorococcus marinus (strain NATL2A)).